The chain runs to 249 residues: Probable transcriptional regulatory protein GOX1679 (249 aa).

This sequence belongs to the TACO1 family.

It localises to the cytoplasm. The polypeptide is Probable transcriptional regulatory protein GOX1679 (Gluconobacter oxydans (strain 621H) (Gluconobacter suboxydans)).